The sequence spans 427 residues: Inward rectifier potassium channel 2 (427 aa).

Topologically, residues 1 to 81 (MGSVRTNRYS…IFTTCVDIRW (81 aa)) are cytoplasmic. Cysteine 76 is subject to S-nitrosocysteine. A helical transmembrane segment spans residues 82 to 106 (RWMLVIFCLAFVLSWLFFGCVFWLI). Topologically, residues 107 to 128 (ALLHGDLDASKESKACVSEVNS) are extracellular. Positions 129–140 (FTAAFLFSIETQ) form an intramembrane region, helical; Pore-forming. The segment at residues 141–147 (TTIGYGF) is an intramembrane region (pore-forming). The Selectivity filter motif lies at 142 to 147 (TIGYGF). Over 148 to 156 (RCVTDECPV) the chain is Extracellular. A helical transmembrane segment spans residues 157–178 (AVFMVVFQSIVGCIIDAFIIGA). The Cytoplasmic portion of the chain corresponds to 179–427 (VMAKMAKPKK…PRPLRRESEI (249 aa)). Positions 181–208 (AKMAKPKKRNETLVFSHNAVIAMRDGKL) are polyphosphoinositide (PIP2)-binding. Residues 384–427 (SKEEDDSENGVPESTSTDTPPDLDLHNQASVPLEPRPLRRESEI) form a disordered region. The PDZ-binding motif lies at 425–427 (SEI).

Belongs to the inward rectifier-type potassium channel (TC 1.A.2.1) family. KCNJ2 subfamily. In terms of assembly, homotetramer. Homomultimeric and heteromultimeric association with KCNJ4/Kir2.3. Can form heteromeric channels with Kir2.6/KCNJ18. Associates, via its PDZ-recognition domain, with a complex containing LIN7A, LIN7B, LIN7C, DLG1, CASK and APBA1. S-nitrosylation increases the open probability and inward rectifying currents.

It is found in the cell membrane. The protein localises to the sarcolemma. The protein resides in the T-tubule. The enzyme catalyses K(+)(in) = K(+)(out). Its activity is regulated as follows. Activated by phosphatidylinositol 4,5 biphosphate (PtdIns(4,5)P2). In terms of biological role, inward rectifier potassium channels are characterized by a greater tendency to allow potassium to flow into the cell rather than out of it. Their voltage dependence is regulated by the concentration of extracellular potassium; as external potassium is raised, the voltage range of the channel opening shifts to more positive voltages. The inward rectification is mainly due to the blockage of outward current by internal magnesium. Blocked by external barium or cesium. Probably participates in establishing action potential waveform and excitability of neuronal and muscle tissues. The protein is Inward rectifier potassium channel 2 (KCNJ2) of Canis lupus familiaris (Dog).